Here is a 740-residue protein sequence, read N- to C-terminus: Alpha-1,6-mannosylglycoprotein 6-beta-N-acetylglucosaminyltransferase A (740 aa).

Residues 1–13 are Cytoplasmic-facing; that stretch reads MAFFSPWKLSSQK. The helical; Signal-anchor for type II membrane protein transmembrane segment at 14-30 threads the bilayer; it reads LGFFLVTFGFIWGMMLL. At 31 to 740 the chain is on the lumenal side; that stretch reads HFTIQQRTQP…GQVALCKDCL (710 aa). N-linked (GlcNAc...) asparagine glycans are attached at residues N109, N114, and N117. 9 cysteine pairs are disulfide-bonded: C144–C182, C155–C195, C171–C337, C371–C625, C648–C723, C652–C725, C659–C712, C680–C701, and C736–C739. The tract at residues 212 to 740 is sufficient for catalytic activity; the sequence is NSLAEIRTDF…GQVALCKDCL (529 aa). A glycan (N-linked (GlcNAc...) asparagine) is linked at N333. 377–378 serves as a coordination point for substrate; that stretch reads DS. N-linked (GlcNAc...) asparagine glycosylation is found at N432 and N446. E525 serves as a coordination point for UDP-N-acetyl-alpha-D-glucosamine. K553 lines the substrate pocket.

The protein belongs to the glycosyltransferase 18 family. Post-translationally, N-glycosylated. A secreted form is released from the membrane after cleavage by gamma-secretase. As to expression, detected in cerebellum.

It is found in the golgi apparatus membrane. It localises to the perikaryon. The protein localises to the secreted. It catalyses the reaction N(4)-{beta-D-GlcNAc-(1-&gt;2)-[beta-D-GlcNAc-(1-&gt;4)]-alpha-D-Man-(1-&gt;3)-[beta-D-GlcNAc-(1-&gt;2)-alpha-D-Man-(1-&gt;6)]-beta-D-Man-(1-&gt;4)-beta-D-GlcNAc-(1-&gt;4)-beta-D-GlcNAc}-L-asparaginyl-[protein] + UDP-N-acetyl-alpha-D-glucosamine = N(4)-{beta-D-GlcNAc-(1-&gt;2)-[beta-D-GlcNAc-(1-&gt;4)]-alpha-D-Man-(1-&gt;3)-[beta-D-GlcNAc-(1-&gt;2)-[beta-D-GlcNAc-(1-&gt;6)]-alpha-D-Man-(1-&gt;6)]-beta-D-Man-(1-&gt;4)-beta-D-GlcNAc-(1-&gt;4)-beta-D-GlcNAc}-L-asparaginyl-[protein] + UDP + H(+). The protein operates within protein modification; protein glycosylation. Its function is as follows. Catalyzes the addition of N-acetylglucosamine (GlcNAc) in beta 1-6 linkage to the alpha-linked mannose of biantennary N-linked oligosaccharides. Catalyzes an important step in the biosynthesis of branched, complex-type N-glycans, such as those found on EGFR, TGFR (TGF-beta receptor) and CDH2. Via its role in the biosynthesis of complex N-glycans, plays an important role in the activation of cellular signaling pathways, reorganization of the actin cytoskeleton, cell-cell adhesion and cell migration. MGAT5-dependent EGFR N-glycosylation enhances the interaction between EGFR and LGALS3 and thereby prevents rapid EGFR endocytosis and prolongs EGFR signaling. Required for efficient interaction between TGFB1 and its receptor. Enhances activation of intracellular signaling pathways by several types of growth factors, including FGF2, PDGF, IGF, TGFB1 and EGF. MGAT5-dependent CDH2 N-glycosylation inhibits CDH2-mediated homotypic cell-cell adhesion and contributes to the regulation of downstream signaling pathways. Promotes cell migration. Contributes to the regulation of the inflammatory response. MGAT5-dependent TCR N-glycosylation enhances the interaction between TCR and LGALS3, limits agonist-induced TCR clustering, and thereby dampens TCR-mediated responses to antigens. Required for normal leukocyte evasation and accumulation at sites of inflammation. Inhibits attachment of monocytes to the vascular endothelium and subsequent monocyte diapedesis. Promotes proliferation of umbilical vein endothelial cells and angiogenesis, at least in part by promoting the release of the growth factor FGF2 from the extracellular matrix. The chain is Alpha-1,6-mannosylglycoprotein 6-beta-N-acetylglucosaminyltransferase A (Mgat5) from Mus musculus (Mouse).